A 53-amino-acid polypeptide reads, in one-letter code: Small, acid-soluble spore protein K (53 aa).

Residues 1 to 53 (MRNKAHNFPNQNNNKLEGEPRAKAEYASKRADGTTNTHPQERMRASGERSDFF) form a disordered region. 2 stretches are compositionally biased toward basic and acidic residues: residues 16 to 32 (LEGE…KRAD) and 39 to 53 (PQER…SDFF).

The protein belongs to the SspK family.

It localises to the spore core. The sequence is that of Small, acid-soluble spore protein K from Geobacillus kaustophilus (strain HTA426).